The following is a 635-amino-acid chain: Glutamine sensor PIB2 (635 aa).

Residues Met-1–Gln-110 form a disordered region. The tract at residues Met-1 to Arg-164 is may play a role in attenuating TORC1 signaling. A compositionally biased stretch (basic and acidic residues) spans Arg-33–Glu-44. Ser-46 and Ser-53 each carry phosphoserine. Thr-56 bears the Phosphothreonine mark. Over residues Ser-67–Asn-85 the composition is skewed to polar residues. Ser-73, Ser-113, Ser-124, Ser-148, Ser-165, and Ser-174 each carry phosphoserine. Disordered regions lie at residues Asn-123 to Gly-181 and Ser-224 to Val-254. Over residues Ser-238 to Val-254 the composition is skewed to low complexity. A phosphoserine mark is found at Ser-300, Ser-309, and Ser-381. A required for interaction with TORC1 region spans residues Leu-304–Arg-440. The FYVE-type; atypical zinc finger occupies Asp-452–Glu-527. The Zn(2+) site is built by Cys-458, Cys-461, Cys-474, Cys-477, Cys-482, His-485, Cys-519, and Cys-522. Disordered regions lie at residues His-534–Lys-557 and Ala-570–Ile-623. Acidic residues-rich tracts occupy residues Ile-543–Asn-553 and Glu-601–Asn-616. Residues Gly-620–Phe-635 are may be required for TORC1 activation.

As to quaternary structure, interacts with the TORC1 complex when activated by glutamine or cysteine. Interacts with TOR1; glutamine enhances the interaction. Interacts with KOG1; glutamine enhances the interaction. Interacts with TCO89. Interacts with LST8; glutamine enhances the interaction. Interacts with TOR2; glutamine enhances the interaction.

It localises to the vacuole membrane. Activated by glutamine. May also be activated by cysteine. Functions as an intracellular glutamine sensor that directly activates the TORC1 signaling pathway, to promote cell growth when glutamine is available. May play a role in repressing NPR1 activity independently of TORC1 signaling. The protein is Glutamine sensor PIB2 of Saccharomyces cerevisiae (strain ATCC 204508 / S288c) (Baker's yeast).